The sequence spans 71 residues: Long neurotoxin 1 (71 aa).

Cystine bridges form between cysteine 3–cysteine 20, cysteine 14–cysteine 41, cysteine 26–cysteine 30, cysteine 45–cysteine 56, and cysteine 57–cysteine 62.

The protein belongs to the three-finger toxin family. Long-chain subfamily. Type II alpha-neurotoxin sub-subfamily. Expressed by the venom gland.

The protein localises to the secreted. Functionally, binds with high affinity to muscular (alpha-1/CHRNA1) and neuronal (alpha-7/CHRNA7) nicotinic acetylcholine receptor (nAChR) and inhibits acetylcholine from binding to the receptor, thereby impairing neuromuscular and neuronal transmission. In Naja nivea (Cape cobra), this protein is Long neurotoxin 1.